A 390-amino-acid polypeptide reads, in one-letter code: Succinyl-diaminopimelate desuccinylase 1 (390 aa).

His76 contributes to the Zn(2+) binding site. Asp78 is a catalytic residue. A Zn(2+)-binding site is contributed by Asp109. Glu143 functions as the Proton acceptor in the catalytic mechanism. Zn(2+) is bound by residues Glu144, Glu172, and His363.

The protein belongs to the peptidase M20A family. DapE subfamily. In terms of assembly, homodimer. The cofactor is Zn(2+). It depends on Co(2+) as a cofactor.

It catalyses the reaction N-succinyl-(2S,6S)-2,6-diaminopimelate + H2O = (2S,6S)-2,6-diaminopimelate + succinate. The protein operates within amino-acid biosynthesis; L-lysine biosynthesis via DAP pathway; LL-2,6-diaminopimelate from (S)-tetrahydrodipicolinate (succinylase route): step 3/3. Functionally, catalyzes the hydrolysis of N-succinyl-L,L-diaminopimelic acid (SDAP), forming succinate and LL-2,6-diaminopimelate (DAP), an intermediate involved in the bacterial biosynthesis of lysine and meso-diaminopimelic acid, an essential component of bacterial cell walls. The chain is Succinyl-diaminopimelate desuccinylase 1 from Alteromonas mediterranea (strain DSM 17117 / CIP 110805 / LMG 28347 / Deep ecotype).